A 207-amino-acid chain; its full sequence is MSLLENLQKLIDQTSLEVTDQQKQQLVQLVELLNKWNKAYNLTSVRDPEQMLVKHIMDSIVVSPYLIGERFIDVGTGPGLPGLPLAILNPDKQFVLLDSLGKRLRFIRQALLELGLKNVTAVQSRVEEYQPEHKFDVVLSRAFASLHDMLYWCKHLPHEEGHFLALKGQFPAQEIKELDKEFEFVESISLQVPTLEGERCLVKIKRI.

Residues Gly75, Leu80, 126–127 (VE), and Arg141 contribute to the S-adenosyl-L-methionine site.

It belongs to the methyltransferase superfamily. RNA methyltransferase RsmG family.

It localises to the cytoplasm. The catalysed reaction is guanosine(527) in 16S rRNA + S-adenosyl-L-methionine = N(7)-methylguanosine(527) in 16S rRNA + S-adenosyl-L-homocysteine. Functionally, specifically methylates the N7 position of guanine in position 527 of 16S rRNA. In Psychromonas ingrahamii (strain DSM 17664 / CCUG 51855 / 37), this protein is Ribosomal RNA small subunit methyltransferase G.